The primary structure comprises 219 residues: Transmembrane emp24 domain-containing protein 10 (219 aa).

An N-terminal signal peptide occupies residues 1–31 (MSGLSGPPTRRGPFPLALLLLFLLGPSLVLA). The segment at 1 to 142 (MSGLSGPPTR…KNYEEIAKVE (142 aa)) is required for interaction with STX17. The Lumenal segment spans residues 32-185 (ISFHLPINSR…RDTNESTNTR (154 aa)). One can recognise a GOLD domain in the interval 41 to 193 (RKCLREEIHK…TRVLYFSIFS (153 aa)). Dimethylated arginine occurs at positions 171 and 176. Residue asparagine 179 is glycosylated (N-linked (GlcNAc...) asparagine). A helical membrane pass occupies residues 186-206 (VLYFSIFSMFCLIGLATWQVF). An interaction with COPG1 region spans residues 204–219 (QVFYLRRFFKAKKLIE). The Cytoplasmic segment spans residues 207-219 (YLRRFFKAKKLIE). The interval 207 to 219 (YLRRFFKAKKLIE) is interaction with ARF1 and IL1B. A COPII vesicle coat-binding motif is present at residues 211–212 (FF). Positions 211–219 (FFKAKKLIE) match the COPI vesicle coat-binding motif.

The protein belongs to the EMP24/GP25L family. As to quaternary structure, predominantly dimeric and to a lesser extent monomeric in the ER. Monomer and dimer in ERGIC and cis-Golgi network. Forms homooligomer (via GOLD domain); the assembly is promoted by direct binding with leaderless cargos and may form a protein channel that facilitates cargo entry into the ERGIC. Forms heterooligomeric complexes with other members of the p24 family such as TMED2, TMED7 and TMED9. Interacts (via GOLD domain) with TMED2 (via GOLD domain); the complex is required for export of TMED10 from the ER to the cis-Golgi network; the complex is proposed to be involved in cis-Golgi network dynamics and / or biogenesis. Associates with the COPI vesicle coat subunits (coatomer). Tetramerization of the cytoplasmic domain at the Golgi membrane in vitro; the complex is proposed to interact with COPI coatomer and induce budding of the vesicles. Interacts with COPG1; the interaction involves TMED10 homodimer. Interacts with ARF1 (GDP-bound); the interaction probably involves a TMED10 oligomer. Interacts with SEC23A, SEC24B, SEC24C and SEC24D components of the coat protein complex II/COPII, indicative of an association of TMED10 with the COPII vesicle coat. Interacts with CD59. Interacts with MPPE1/PGAP5; the complex might recruit and sort GPI-anchored proteins to the ER-exit site, or the interaction might lead to recycling of PGAP5 between the ER and the Golgi. Interacts with F2LR1/PAR2. Interacts with KDELR2/ERD2; the interaction is disrupted by KDELR2 ligand. Found in a complex composed at least of SURF4, TMED2 and TMED10. Associates with the presenilin-dependent gamma-secretase complex. Interacts with STX17; the interaction is direct. Interacts with IL-1; the interaction is direct. Interacts with RAB21 (active GTP-bound form); the interaction is indirect and regulates TMED10 abundance and localization at the Golgi.

It is found in the endoplasmic reticulum membrane. The protein resides in the endoplasmic reticulum-Golgi intermediate compartment membrane. It localises to the golgi apparatus membrane. The protein localises to the golgi apparatus. Its subcellular location is the cis-Golgi network membrane. It is found in the trans-Golgi network membrane. The protein resides in the cytoplasmic vesicle. It localises to the secretory vesicle membrane. The protein localises to the cell membrane. Its subcellular location is the melanosome. Its function is as follows. Cargo receptor involved in protein vesicular trafficking and quality control in the endoplasmic reticulum (ER) and Golgi. The p24 protein family is a group of transmembrane proteins that bind coat protein complex I/COPI and coat protein complex II/COPII involved in vesicular trafficking between the membranes. Acts at the lumenal side for incorporation of secretory cargo molecules into transport vesicles and involved in vesicle coat formation at the cytoplasmic side. Mainly functions in the early secretory pathway and cycles between the ER, ER-Golgi intermediate compartment (ERGIC) and Golgi, mediating cargo transport through COPI and COPII-coated vesicles. In COPII vesicle-mediated anterograde transport, involved in the transport of GPI-anchored proteins by acting together with TMED2 as their cargo receptor; the function specifically implies SEC24C and SEC24D of the COPII vesicle coat and lipid raft-like microdomains of the ER. Recognizes GPI anchors structural remodeled in the ER by the GPI inositol-deacylase/PGAP1 and the metallophosphoesterase MPPE1/PGAP5. In COPI vesicle-mediated retrograde transport, involved in the biogenesis of COPI vesicles and vesicle coat recruitment. Involved in trafficking of amyloid beta A4 protein and soluble APP-beta release (independent from the modulation of gamma-secretase activity). Involved in the KDELR2-mediated retrograde transport of the toxin A subunit (CTX-A-K63)together with COPI and the COOH terminus of KDELR2. On Golgi membranes, acts as a primary receptor for ARF1-GDP, a GTP-binding protein involved in COPI-vesicle formation. Increases coatomer-dependent GTPase-activating activity of ARFGAP2 which mediates the hydrolysis of ARF1-bound GTP and therefore modulates protein trafficking from the Golgi apparatus. Involved in the exocytic trafficking of G protein-coupled receptors F2LR1/PAR2 (trypsin and tryspin-like enzyme receptor), OPRM1 (opioid receptor) and P2RY4 (UTD and UDP receptor) from the Golgi to the plasma membrane, thus contributing to receptor resensitization. In addition to its cargo receptor activity, may also act as a protein channel after oligomerization, facilitating the post-translational entry of leaderless cytoplasmic cargo into the ERGIC. Involved in the translocation into ERGIC, the vesicle entry and the secretion of leaderless cargos (lacking the secretion signal sequence), including the mature form of interleukin 1/IL-1 family members, the alpha-crystallin B chain HSPB5, the carbohydrate-binding proteins galectin-1/LGALS1 and galectin-3/LGALS3, the microtubule-associated protein Tau/MAPT, and the annexin A1/ANXA1; the translocation process is dependent on cargo protein unfolding and enhanced by chaperones HSP90AB1 and HSP90B1/GRP9. Could also associates with the presenilin-dependent gamma-secretase complex in order to regulate gamma-cleavages of the amyloid beta A4 protein to yield amyloid-beta 40/Abeta40. This chain is Transmembrane emp24 domain-containing protein 10 (TMED10), found in Pongo abelii (Sumatran orangutan).